We begin with the raw amino-acid sequence, 238 residues long: Ribonuclease PH (238 aa).

Residues R86 and 124–126 (GTR) each bind phosphate.

The protein belongs to the RNase PH family. As to quaternary structure, homohexameric ring arranged as a trimer of dimers.

It catalyses the reaction tRNA(n+1) + phosphate = tRNA(n) + a ribonucleoside 5'-diphosphate. Phosphorolytic 3'-5' exoribonuclease that plays an important role in tRNA 3'-end maturation. Removes nucleotide residues following the 3'-CCA terminus of tRNAs; can also add nucleotides to the ends of RNA molecules by using nucleoside diphosphates as substrates, but this may not be physiologically important. Probably plays a role in initiation of 16S rRNA degradation (leading to ribosome degradation) during starvation. The sequence is that of Ribonuclease PH from Psychrobacter sp. (strain PRwf-1).